The chain runs to 228 residues: PKHD-type hydroxylase XAC2942 (228 aa).

The 103-residue stretch at 78-180 (RIYPPLFNRY…RVACFFWAQS (103 aa)) folds into the Fe2OG dioxygenase domain. Fe cation contacts are provided by His96, Asp98, and His161. Residue Arg171 coordinates 2-oxoglutarate.

Fe(2+) serves as cofactor. L-ascorbate is required as a cofactor.

This is PKHD-type hydroxylase XAC2942 from Xanthomonas axonopodis pv. citri (strain 306).